Here is a 186-residue protein sequence, read N- to C-terminus: ATP synthase subunit delta (186 aa).

The protein belongs to the ATPase delta chain family. As to quaternary structure, F-type ATPases have 2 components, F(1) - the catalytic core - and F(0) - the membrane proton channel. F(1) has five subunits: alpha(3), beta(3), gamma(1), delta(1), epsilon(1). CF(0) has four main subunits: a(1), b(1), b'(1) and c(10-14). The alpha and beta chains form an alternating ring which encloses part of the gamma chain. F(1) is attached to F(0) by a central stalk formed by the gamma and epsilon chains, while a peripheral stalk is formed by the delta, b and b' chains.

The protein resides in the cell inner membrane. Functionally, f(1)F(0) ATP synthase produces ATP from ADP in the presence of a proton or sodium gradient. F-type ATPases consist of two structural domains, F(1) containing the extramembraneous catalytic core and F(0) containing the membrane proton channel, linked together by a central stalk and a peripheral stalk. During catalysis, ATP synthesis in the catalytic domain of F(1) is coupled via a rotary mechanism of the central stalk subunits to proton translocation. In terms of biological role, this protein is part of the stalk that links CF(0) to CF(1). It either transmits conformational changes from CF(0) to CF(1) or is implicated in proton conduction. The protein is ATP synthase subunit delta of Rhodospirillum centenum (strain ATCC 51521 / SW).